The primary structure comprises 66 residues: Protein translocase subunit SecE (66 aa).

Residues 41 to 61 (LAVMFIVGFVGFVIYILMEIL) form a helical membrane-spanning segment.

Belongs to the SecE/SEC61-gamma family. As to quaternary structure, component of the Sec protein translocase complex. Heterotrimer consisting of SecY (alpha), SecG (beta) and SecE (gamma) subunits. The heterotrimers can form oligomers, although 1 heterotrimer is thought to be able to translocate proteins. Interacts with the ribosome. May interact with SecDF, and other proteins may be involved.

The protein resides in the cell membrane. In terms of biological role, essential subunit of the Sec protein translocation channel SecYEG. Clamps together the 2 halves of SecY. May contact the channel plug during translocation. The chain is Protein translocase subunit SecE from Archaeoglobus fulgidus (strain ATCC 49558 / DSM 4304 / JCM 9628 / NBRC 100126 / VC-16).